Consider the following 584-residue polypeptide: Dihydroxyacetone kinase 1 (584 aa).

At S2 the chain carries N-acetylserine. Residues S2 and S5 each carry the phosphoserine modification. The DhaK domain occupies 7 to 353 (EVTDPVNSSL…LNAFTNAPGW (347 aa)). Residues 51–54 (GSGH), K103, and D108 contribute to the substrate site. H220 acts as the Tele-hemiaminal-histidine intermediate in catalysis. The residue at position 365 (S365) is a Phosphoserine. Positions 386 to 582 (DKFAEWMKSG…LCEFLKGVQS (197 aa)) constitute a DhaL domain. Residues 415-418 (DGDC) and 459-460 (TS) contribute to the ATP site. At S512 the chain carries Phosphoserine. Residues 514 to 515 (TM) and 567 to 569 (DPG) contribute to the ATP site.

It belongs to the dihydroxyacetone kinase (DAK) family.

It catalyses the reaction dihydroxyacetone + ATP = dihydroxyacetone phosphate + ADP + H(+). The catalysed reaction is D-glyceraldehyde + ATP = D-glyceraldehyde 3-phosphate + ADP + H(+). Its pathway is polyol metabolism; glycerol fermentation; glycerone phosphate from glycerol (oxidative route): step 2/2. Its function is as follows. Catalyzes both the phosphorylation of dihydroxyacetone and of glyceraldehyde. In Saccharomyces cerevisiae (strain ATCC 204508 / S288c) (Baker's yeast), this protein is Dihydroxyacetone kinase 1 (DAK1).